The sequence spans 255 residues: uncharacterized protein (255 aa).

Transmembrane regions (helical) follow at residues 2–22 (LLPA…YGVL) and 168–188 (VASV…FNLF).

The protein resides in the cell membrane. This is an uncharacterized protein from Mycobacterium tuberculosis (strain ATCC 25618 / H37Rv).